We begin with the raw amino-acid sequence, 170 residues long: Peptide deformylase (170 aa).

The Fe cation site is built by Cys-91 and His-133. The active site involves Glu-134. His-137 contacts Fe cation.

This sequence belongs to the polypeptide deformylase family. Requires Fe(2+) as cofactor.

It catalyses the reaction N-terminal N-formyl-L-methionyl-[peptide] + H2O = N-terminal L-methionyl-[peptide] + formate. Removes the formyl group from the N-terminal Met of newly synthesized proteins. Requires at least a dipeptide for an efficient rate of reaction. N-terminal L-methionine is a prerequisite for activity but the enzyme has broad specificity at other positions. This Aeromonas salmonicida (strain A449) protein is Peptide deformylase.